A 269-amino-acid chain; its full sequence is Regulating synaptic membrane exocytosis protein 4 (269 aa).

A C2 domain is found at 115 to 233; sequence PMGDVEIGLQ…DLTTLAVGWY (119 aa). Phosphoserine is present on residues serine 254 and serine 257.

As to quaternary structure, binds PPFIA3. Does not bind RAB3.

The protein resides in the synapse. Its function is as follows. Regulates synaptic membrane exocytosis. This chain is Regulating synaptic membrane exocytosis protein 4 (Rims4), found in Mus musculus (Mouse).